Here is a 333-residue protein sequence, read N- to C-terminus: Methylosome protein WDR77 (333 aa).

WD repeat units follow at residues 16-59 (CMEV…GAPN), 68-106 (QTEAGVTDVAWVSEKGILVASDSGAVELWEILEKESLLV), 113-152 (EHDDIVKTLSVFSDGTQAVSGGKDFSVKVWDLSQKAVLKS), 155-195 (AHSS…PATR), 199-240 (CASD…SAQT), 243-283 (VHSQ…VFRD), and 285-328 (SHRD…NLIA).

As to quaternary structure, heterotetramer; dimer of heterodimer with prmt5. Interacts with histone h2a and h4 and with nucleoplasmin. In terms of tissue distribution, detected in egg (at protein level).

The protein localises to the cytoplasm. It localises to the nucleus. In terms of biological role, non-catalytic component of the 20S prmt5-containing methyltransferase complex, which modifies specific arginines to dimethylarginines in several spliceosomal Sm proteins and histones. Required for normal prmt5 methyltransferase activity. In Xenopus laevis (African clawed frog), this protein is Methylosome protein WDR77.